We begin with the raw amino-acid sequence, 279 residues long: Undecaprenyl-diphosphatase (279 aa).

8 helical membrane-spanning segments follow: residues 2-22 (LFIE…TEWL), 44-64 (AFME…VIVI), 85-105 (WQLW…AVPL), 113-133 (FNHM…FLWI), 163-183 (VLSI…AIIL), 188-208 (TVAA…YSGL), 225-245 (LLVL…VIKL), and 255-275 (FTVF…YSVF).

This sequence belongs to the UppP family.

The protein resides in the cell membrane. It catalyses the reaction di-trans,octa-cis-undecaprenyl diphosphate + H2O = di-trans,octa-cis-undecaprenyl phosphate + phosphate + H(+). In terms of biological role, catalyzes the dephosphorylation of undecaprenyl diphosphate (UPP). Confers resistance to bacitracin. This is Undecaprenyl-diphosphatase from Streptococcus equi subsp. equi (strain 4047).